A 932-amino-acid chain; its full sequence is DNA mismatch repair protein MutS (932 aa).

615–622 serves as a coordination point for ATP; sequence GPNMAGKS.

Belongs to the DNA mismatch repair MutS family.

This protein is involved in the repair of mismatches in DNA. It is possible that it carries out the mismatch recognition step. This protein has a weak ATPase activity. This chain is DNA mismatch repair protein MutS, found in Clostridium botulinum (strain Kyoto / Type A2).